The following is a 963-amino-acid chain: Unconventional myosin-XIX (963 aa).

The region spanning 35–758 is the Myosin motor domain; sequence HQLDDLTKVN…MLELLECGRA (724 aa). 132–139 serves as a coordination point for ATP; the sequence is GESGAGKT. Residues 602-624 are actin-binding; the sequence is LEQLLQVLHNTTPHYIRCIKPNS. IQ domains are found at residues 762-782 and 783-812; these read EQCA…KQEK and QRRA…AATV. Positions 829–963 are myMOMA region; the sequence is SKELDGMEEK…LLESHRPVQV (135 aa).

It belongs to the TRAFAC class myosin-kinesin ATPase superfamily. Myosin family. As to quaternary structure, myosin is a hexamer of 2 heavy chains and 4 light chains: interacts with myosin light chains MYL9 and MYL12B.

It is found in the mitochondrion outer membrane. It localises to the cytoplasm. Its subcellular location is the cytoskeleton. In terms of biological role, actin-based motor molecule with ATPase activity that localizes to the mitochondrion outer membrane. Motor protein that moves towards the plus-end of actin filaments. Required for mitochondrial inheritance during mitosis. May be involved in mitochondrial transport or positioning. The chain is Unconventional myosin-XIX from Mus musculus (Mouse).